A 376-amino-acid chain; its full sequence is WW domain-binding protein 4 (376 aa).

Residues 11–42 form a Matrin-type zinc finger; sequence KFCDYCKCWIADNRPSVEFHERGKNHKENVAK. The span at 94–107 shows a compositional bias: low complexity; it reads ITPVTSTIPPTSTS. Disordered stretches follow at residues 94 to 128, 189 to 335, and 356 to 376; these read ITPVTSTIPPTSTSNQQKEKKEKKKRKKDPSKGRW, SRWE…EPKV, and FKKRRTENGKSRNLRQRGDDQ. WW domains are found at residues 122–155 and 163–196; these read DPSKGRWVEGITSEGYHYYYDLISGASQWEKPEG and TAVKTVWVEGLSEDGFTYYYNTETGESRWEKPDD. The span at 189–198 shows a compositional bias: basic and acidic residues; sequence SRWEKPDDFI. Over residues 203-215 the composition is skewed to polar residues; the sequence is DLPSSKVNENSLG. Basic and acidic residues-rich tracts occupy residues 218-229 and 243-257; these read DESKSSDSHSDS and ETEKPKIKFKEKNKN. A phosphoserine mark is found at S220, S227, and S229. The residue at position 262 (S262) is a Phosphoserine. Positions 298–309 are enriched in basic and acidic residues; it reads QEIKQEVESHEE. Polar residues predominate over residues 316 to 326; that stretch reads STENEYVSTSE. Positions 357 to 375 are interaction with SNRNP200; that stretch reads KKRRTENGKSRNLRQRGDD. Residues 361–376 are compositionally biased toward basic and acidic residues; that stretch reads TENGKSRNLRQRGDDQ.

As to quaternary structure, component of the spliceosome B complex. Associated with U2 snRNPs. Binds splicing factors SNRPB, SNRPC and SF1. Interacts via the WW domains with the Pro-rich domains of KHDRBS1/SAM68. Interacts via the WW domains with the Pro-rich domains of WBP11. Interacts with SNRNP200.

It localises to the nucleus. It is found in the nucleus speckle. Involved in pre-mRNA splicing as a component of the spliceosome. May play a role in cross-intron bridging of U1 and U2 snRNPs in the mammalian A complex. The chain is WW domain-binding protein 4 (WBP4) from Homo sapiens (Human).